A 726-amino-acid polypeptide reads, in one-letter code: Putative tyrosine-protein kinase AmsA (726 aa).

A run of 2 helical transmembrane segments spans residues Trp-32–Ala-52 and Ile-425–Met-445.

Belongs to the etk/wzc family.

Its subcellular location is the cell inner membrane. It catalyses the reaction L-tyrosyl-[protein] + ATP = O-phospho-L-tyrosyl-[protein] + ADP + H(+). Its pathway is glycan metabolism; exopolysaccharide biosynthesis. Its function is as follows. Involved in the biosynthesis of amylovoran which functions as a virulence factor. This Erwinia amylovora (Fire blight bacteria) protein is Putative tyrosine-protein kinase AmsA (amsA).